A 79-amino-acid polypeptide reads, in one-letter code: uncharacterized protein (79 aa).

This sequence belongs to the BolA/IbaG family.

This is an uncharacterized protein from Buchnera aphidicola subsp. Baizongia pistaciae (strain Bp).